The primary structure comprises 25 residues: KAKCAEIDQDCKTSCDCCKGACTCY.

Disulfide bonds link cysteine 4–cysteine 18 and cysteine 11–cysteine 22.

Monomer. As to expression, expressed by the venom gland.

Its subcellular location is the secreted. In terms of biological role, neurotoxin. The chain is U11-ctenitoxin-Co1b from Ctenus ornatus (Brazilian spider).